Consider the following 147-residue polypeptide: UPF0306 protein YhbP (147 aa).

Belongs to the UPF0306 family.

This Escherichia coli (strain K12 / MC4100 / BW2952) protein is UPF0306 protein YhbP.